Reading from the N-terminus, the 195-residue chain is Imidazoleglycerol-phosphate dehydratase (195 aa).

Belongs to the imidazoleglycerol-phosphate dehydratase family.

The protein resides in the cytoplasm. The catalysed reaction is D-erythro-1-(imidazol-4-yl)glycerol 3-phosphate = 3-(imidazol-4-yl)-2-oxopropyl phosphate + H2O. It participates in amino-acid biosynthesis; L-histidine biosynthesis; L-histidine from 5-phospho-alpha-D-ribose 1-diphosphate: step 6/9. This chain is Imidazoleglycerol-phosphate dehydratase, found in Haloarcula marismortui (strain ATCC 43049 / DSM 3752 / JCM 8966 / VKM B-1809) (Halobacterium marismortui).